The sequence spans 90 residues: Small ribosomal subunit protein bS18B (90 aa).

Belongs to the bacterial ribosomal protein bS18 family. As to quaternary structure, part of the 30S ribosomal subunit. Forms a tight heterodimer with protein bS6.

Binds as a heterodimer with protein bS6 to the central domain of the 16S rRNA, where it helps stabilize the platform of the 30S subunit. The sequence is that of Small ribosomal subunit protein bS18B from Roseiflexus sp. (strain RS-1).